The sequence spans 687 residues: DNA-directed RNA polymerase subunit beta' (687 aa).

Zn(2+)-binding residues include C69, C71, C87, and C90. Residues D492, D494, and D496 each contribute to the Mg(2+) site.

The protein belongs to the RNA polymerase beta' chain family. RpoC1 subfamily. In plastids the minimal PEP RNA polymerase catalytic core is composed of four subunits: alpha, beta, beta', and beta''. When a (nuclear-encoded) sigma factor is associated with the core the holoenzyme is formed, which can initiate transcription. The cofactor is Mg(2+). Zn(2+) is required as a cofactor.

It is found in the plastid. It localises to the chloroplast. It carries out the reaction RNA(n) + a ribonucleoside 5'-triphosphate = RNA(n+1) + diphosphate. DNA-dependent RNA polymerase catalyzes the transcription of DNA into RNA using the four ribonucleoside triphosphates as substrates. The chain is DNA-directed RNA polymerase subunit beta' from Silene latifolia (White campion).